The sequence spans 181 residues: Large ribosomal subunit protein uL6 (181 aa).

It belongs to the universal ribosomal protein uL6 family. As to quaternary structure, part of the 50S ribosomal subunit.

This protein binds to the 23S rRNA, and is important in its secondary structure. It is located near the subunit interface in the base of the L7/L12 stalk, and near the tRNA binding site of the peptidyltransferase center. This Vesicomyosocius okutanii subsp. Calyptogena okutanii (strain HA) protein is Large ribosomal subunit protein uL6.